A 312-amino-acid polypeptide reads, in one-letter code: Zinc finger CCCH domain-containing protein 25 (312 aa).

Residues 36-114 enclose the RRM domain; the sequence is AYVFVGGIPY…RIVRVDHVSK (79 aa). Residues 130–157 form a C3H1-type zinc finger; sequence REARGVCYAFQKGECNRGASCRYSHDEQ. The tract at residues 153–312 is disordered; it reads SHDEQRNANT…DSERYRKSRR (160 aa). 3 stretches are compositionally biased toward basic and acidic residues: residues 166–184, 197–210, and 219–312; these read SKEE…EPPM, RFPD…KSTG, and EAYK…KSRR.

This Oryza sativa subsp. japonica (Rice) protein is Zinc finger CCCH domain-containing protein 25.